A 399-amino-acid polypeptide reads, in one-letter code: Protein IQ-DOMAIN 25 (399 aa).

Residues 1 to 8 carry the Nuclear localization signal motif; it reads MRKNLTKL. Calmodulin-binding regions lie at residues 81 to 91 and 99 to 110; these read KERRTHAIAVA and DAAVAAAKAAAA. 2 consecutive IQ domains span residues 130–158 and 159–181; these read EHRA…GVVK and IQAL…SMEA. Disordered regions lie at residues 198–219, 262–302, and 346–377; these read NGNA…ENRN, SPLS…SPAR, and LRSH…VRMQ. The segment covering 285-294 has biased composition (polar residues); it reads KFPTAQSTPR.

Belongs to the IQD family. As to quaternary structure, binds to multiple calmodulin (CaM) in the presence of Ca(2+) and CaM-like proteins.

It localises to the nucleus. Its subcellular location is the cell membrane. In terms of biological role, may be involved in cooperative interactions with calmodulins or calmodulin-like proteins. Recruits calmodulin proteins to microtubules, thus being a potential scaffold in cellular signaling and trafficking. May associate with nucleic acids and regulate gene expression at the transcriptional or post-transcriptional level. The polypeptide is Protein IQ-DOMAIN 25 (Arabidopsis thaliana (Mouse-ear cress)).